A 160-amino-acid polypeptide reads, in one-letter code: Large ribosomal subunit protein uL15 (160 aa).

The span at 1-13 (MKLNELRDNEGAA) shows a compositional bias: basic and acidic residues. Residues 1 to 51 (MKLNELRDNEGAARKKKRVARGPGSGKGKTAGRGIKGQKSRSGVALNGYEG) form a disordered region. Residues 23-35 (PGSGKGKTAGRGI) are compositionally biased toward gly residues.

It belongs to the universal ribosomal protein uL15 family. Part of the 50S ribosomal subunit.

Binds to the 23S rRNA. The protein is Large ribosomal subunit protein uL15 of Cereibacter sphaeroides (strain ATCC 17025 / ATH 2.4.3) (Rhodobacter sphaeroides).